Here is a 347-residue protein sequence, read N- to C-terminus: Mitochondrial glycine transporter (347 aa).

Solcar repeat units lie at residues 18-102 (SKPT…LRTA), 138-222 (LSHT…SKRS), and 247-331 (STAS…LIMW). 6 consecutive transmembrane segments (helical) span residues 24–49 (FAAG…TRVQ), 77–103 (GTLP…RTAV), 144–169 (LITG…VRYE), 197–220 (GFGA…EQSK), 251–277 (INFI…KTRV), and 306–324 (GLGL…AWTV).

It belongs to the mitochondrial carrier (TC 2.A.29) family. SLC25A38 subfamily.

Its subcellular location is the mitochondrion inner membrane. It carries out the reaction glycine(in) = glycine(out). Mitochondrial glycine transporter that imports glycine into the mitochondrial matrix. Plays an important role in providing glycine for the first enzymatic step in heme biosynthesis, the condensation of glycine with succinyl-CoA to produce 5-aminolevulinate (ALA) in the mitochondrial matrix. The polypeptide is Mitochondrial glycine transporter (Coccidioides immitis (strain RS) (Valley fever fungus)).